The primary structure comprises 218 residues: Cytochrome c biogenesis ATP-binding export protein CcmA (218 aa).

The ABC transporter domain occupies 2 to 217 (LEAKNLTCIR…KSCLSACCAV (216 aa)). Residue 34-41 (GPNGAGKT) participates in ATP binding.

The protein belongs to the ABC transporter superfamily. CcmA exporter (TC 3.A.1.107) family. As to quaternary structure, the complex is composed of two ATP-binding proteins (CcmA) and two transmembrane proteins (CcmB).

It is found in the cell inner membrane. The enzyme catalyses heme b(in) + ATP + H2O = heme b(out) + ADP + phosphate + H(+). In terms of biological role, part of the ABC transporter complex CcmAB involved in the biogenesis of c-type cytochromes; once thought to export heme, this seems not to be the case, but its exact role is uncertain. Responsible for energy coupling to the transport system. This chain is Cytochrome c biogenesis ATP-binding export protein CcmA, found in Yersinia pseudotuberculosis serotype I (strain IP32953).